Reading from the N-terminus, the 498-residue chain is Alpha-amylase A (498 aa).

The N-terminal stretch at 1–21 is a signal peptide; that stretch reads MMVAWWSLFLYGLQVAAPALA. Cysteines 51 and 59 form a disulfide. Residues Gln56 and Trp104 each contribute to the substrate site. Asn142 lines the Ca(2+) pocket. His143 contacts substrate. Cys171 and Cys185 form a disulfide bridge. 2 residues coordinate Ca(2+): Glu183 and Asp196. An N-linked (GlcNAc...) asparagine glycan is attached at Asn218. Arg225 contributes to the substrate binding site. 3 residues coordinate Ca(2+): Asp227, His231, and Glu251. Residue Asp227 is the Nucleophile of the active site. 230–231 serves as a coordination point for substrate; it reads KH. The Proton donor role is filled by Glu251. Residue Gly255 participates in substrate binding. Cys261 and Cys304 form a disulfide bridge. Positions 318 and 365 each coordinate substrate. A disulfide bridge links Cys461 with Cys496.

This sequence belongs to the glycosyl hydrolase 13 family. The cofactor is Ca(2+).

The catalysed reaction is Endohydrolysis of (1-&gt;4)-alpha-D-glucosidic linkages in polysaccharides containing three or more (1-&gt;4)-alpha-linked D-glucose units.. In Aspergillus awamori (Black koji mold), this protein is Alpha-amylase A (amyA).